Here is a 239-residue protein sequence, read N- to C-terminus: Protein GUCD1 (239 aa).

The polypeptide is Protein GUCD1 (Gucd1) (Mus musculus (Mouse)).